The following is a 1325-amino-acid chain: Clustered mitochondria protein homolog (1325 aa).

The Clu domain occupies 311-573 (PKHESDPMRT…RHTPMDVTWL (263 aa)). Disordered stretches follow at residues 893-937 (KHAE…PLRT), 1032-1063 (DSNQ…DDQL), and 1245-1325 (QHAR…AKRS). The segment covering 1265–1275 (SAHHHHHRHLH) has biased composition (basic residues). Positions 1276 to 1285 (QQQQNSSSSP) are enriched in low complexity. A compositionally biased stretch (basic residues) spans 1314–1325 (AARKRAARAKRS).

It belongs to the CLU family. As to quaternary structure, may associate with the eukaryotic translation initiation factor 3 (eIF-3) complex.

Its subcellular location is the cytoplasm. Functionally, mRNA-binding protein involved in proper cytoplasmic distribution of mitochondria. This Malassezia globosa (strain ATCC MYA-4612 / CBS 7966) (Dandruff-associated fungus) protein is Clustered mitochondria protein homolog.